A 377-amino-acid chain; its full sequence is MSPLNQSAEGLPQEASNRSLNATETSEAWDPRTLQALKISLAVVLSVITLATVLSNAFVLTTILLTRKLHTPANYLIGSLATTDLLVSILVMPISIAYTITHTWNFGQILCDIWLSSDITCCTASILHLCVIALDRYWAITDALEYSKRRTAGHAATMIAIVWAISICISIPPLFWRQAKAQEEMSDCLVNTSQISYTIYSTCGAFYIPSVLLIILYGRIYRAARNRILNPPSLYGKRFTTAHLITGSAGSSLCSLNSSLHEGHSHSAGSPLFFNHVKIKLADSALERKRISAARERKATKILGIILGAFIICWLPFFVVSLVLPICRDSCWIHPALFDFFTWLGYLNSLINPIIYTVFNEEFRQAFQKIVPFRKAS.

A disordered region spans residues Met1–Thr23. The Extracellular segment spans residues Met1 to Lys38. N-linked (GlcNAc...) asparagine glycans are attached at residues Asn5, Asn17, and Asn21. Residues Ile39–Leu64 traverse the membrane as a helical segment. Topologically, residues Leu65–Tyr75 are cytoplasmic. Residues Leu76–Ala97 form a helical membrane-spanning segment. Residues Tyr98 to Ile109 lie on the Extracellular side of the membrane. A helical membrane pass occupies residues Leu110–Leu134. Cys111 and Cys188 are joined by a disulfide. Positions 118 and 122 each coordinate serotonin. A DRY motif; important for ligand-induced conformation changes motif is present at residues Asp135–Tyr137. The Cytoplasmic segment spans residues Asp135–His154. The helical transmembrane segment at Ala155–Trp176 threads the bilayer. The Extracellular segment spans residues Arg177–Gln194. The chain crosses the membrane as a helical span at residues Ile195–Gly218. Residues Arg219–Thr300 are Cytoplasmic-facing. Residues Lys301 to Ile326 traverse the membrane as a helical segment. Ser321 serves as a coordination point for serotonin. Residues Cys327 to Pro335 lie on the Extracellular side of the membrane. The helical transmembrane segment at Ala336–Phe359 threads the bilayer. Residues Asn352–Tyr356 carry the NPxxY motif; important for ligand-induced conformation changes and signaling motif. At Asn360–Ser377 the chain is on the cytoplasmic side.

The protein belongs to the G-protein coupled receptor 1 family. In terms of assembly, homodimer. Heterodimer with HTR1B. As to expression, detected in brain neocortex and caudate nucleus (at protein level).

It is found in the cell membrane. In terms of biological role, G-protein coupled receptor for 5-hydroxytryptamine (serotonin). Also functions as a receptor for ergot alkaloid derivatives, various anxiolytic and antidepressant drugs and other psychoactive substances. Ligand binding causes a conformation change that triggers signaling via guanine nucleotide-binding proteins (G proteins) and modulates the activity of downstream effectors, such as adenylate cyclase. HTR1D is coupled to G(i)/G(o) G alpha proteins and mediates inhibitory neurotransmission by inhibiting adenylate cyclase activity. Regulates the release of 5-hydroxytryptamine in the brain, and thereby affects neural activity. May also play a role in regulating the release of other neurotransmitters. May play a role in vasoconstriction. The sequence is that of 5-hydroxytryptamine receptor 1D from Homo sapiens (Human).